A 253-amino-acid chain; its full sequence is Chorismate mutase 2, cytosolic (253 aa).

Positions 2 to 253 (DAAGGDQLSL…EVEYLLRRLD (252 aa)) constitute a Chorismate mutase domain.

As to quaternary structure, homodimer. Interacts with Cmu1 of the fungal pathogen Ustilago maydis.

The protein localises to the cytoplasm. The protein resides in the cytosol. The catalysed reaction is chorismate = prephenate. Its pathway is metabolic intermediate biosynthesis; prephenate biosynthesis; prephenate from chorismate: step 1/1. Its activity is regulated as follows. No allosteric regulation. The sequence is that of Chorismate mutase 2, cytosolic from Zea mays (Maize).